Here is a 277-residue protein sequence, read N- to C-terminus: Shikimate dehydrogenase (NADP(+)) (277 aa).

Shikimate-binding positions include 14-16 (SKS) and threonine 61. Catalysis depends on lysine 65, which acts as the Proton acceptor. Position 77 (aspartate 77) interacts with NADP(+). Residues asparagine 86 and aspartate 102 each contribute to the shikimate site. NADP(+) contacts are provided by residues 127-131 (GAGGA), 151-156 (NRTPDK), and methionine 215. Residue tyrosine 217 coordinates shikimate. An NADP(+)-binding site is contributed by glycine 239.

Belongs to the shikimate dehydrogenase family. In terms of assembly, homodimer.

The enzyme catalyses shikimate + NADP(+) = 3-dehydroshikimate + NADPH + H(+). The protein operates within metabolic intermediate biosynthesis; chorismate biosynthesis; chorismate from D-erythrose 4-phosphate and phosphoenolpyruvate: step 4/7. Functionally, involved in the biosynthesis of the chorismate, which leads to the biosynthesis of aromatic amino acids. Catalyzes the reversible NADPH linked reduction of 3-dehydroshikimate (DHSA) to yield shikimate (SA). The sequence is that of Shikimate dehydrogenase (NADP(+)) from Nitrosomonas eutropha (strain DSM 101675 / C91 / Nm57).